The primary structure comprises 83 residues: Arminin 3a (83 aa).

An N-terminal signal peptide occupies residues 1–18 (MKTVFAILFLTFIALTCA). The propeptide occupies 19 to 57 (RNYEDLKEKIKNEVEREIFEDLEEESDELENNFKKFNDA). Position 80 is an alanine amide (Ala-80).

It belongs to the arminin family. As to expression, expressed in entodermal epithelium along the body column.

It is found in the secreted. Its subcellular location is the target cell membrane. Its function is as follows. Antimicrobial peptide with a broad-spectrum antimicrobial activity. Keeps its antibacterial activity under a wide range of salt concentrations that mimic physiological conditions of human blood, which is surprising, since Hydra is an obligate freshwater animal with nearly no salt tolerance. Does not affect red blood cells. The sequence is that of Arminin 3a from Hydra vulgaris (Hydra).